The sequence spans 1040 residues: MQVLPPGSTGGPSRLFILRPVATTLLMAAILLAGIIGYRFLPVAALPEVDYPTIQVVTLYPGASPDVMTSSVTAPLERQFGQMSGLKQMSSQSSGGASVVTLQFQLTLPLDVAEQEVQAAINAATNLLPSDLPNPPIYSKVNPADPPIMTLAVTSNAMPMTQVEDMVETRVAQKISQVSGVGLVTLAGGQRPAVRVKLNAQAIAALGLTSETVRTAITGANVNSAKGSLDGPERAVTLSANDQMQSADEYRKLIIAYQNGAPVRLGDVATVEQGAENSWLGAWANQAPAIVMNVQRQPGANIIATADSIRQMLPQLTESLPKSVKVTVLSDRTTNIRASVRDTQFELMLAIALVVMIIYLFLRNIPATIIPGVAVPLSLIGTFAVMVFLDFSINNLTLMALTIATGFVVDDAIVVIENISRYIEKGEKPLAAALKGAGEIGFTIISLTFSLIAVLIPLLFMGDIVGRLFREFAVTLAVAILISAVVSLTLTPMMCARMLSRQSLRKQNRFSRACERMFDRVIASYGRGLAKVLNHPWLTLSVAFATLLLSVMLWITIPKGFFPVQDNGIIQGTLQAPQSSSYASMAQRQRQVAERILQDPAVQSLTTFVGVDGANPTLNSARLQINLKPLDARDDRVQQVISRLQTAVATIPGVALYLQPTQDLTIDTQVSRTQYQFTLQATTLDALSHWVPKLQNALQSLPQLSEVSSDWQDRGLAAWVNVDRDSASRLGISMADVDNALYNAFGQRLISTIYTQANQYRVVLEHNTASTPGLAALETIRLTSRDGGTVPLSAIARIEQRFAPLSINHLDQFPVTTFSFNVPEGYSLGDAVQAILDTEKTLALPADITTQFQGSTLAFQAALGSTVWLIVAAVVAMYIVLGVLYESFIHPITILSTLPTAGVGALLALIIAGSELDIIAIIGIILLIGIVKKNAIMMIDFALAAEREQGMSPRDAIFQACLLRFRPILMTTLAALLGALPLMLSTGVGAELRRPLGIAMVGGLLVSQVLTLFTTPVIYLLFDRLSLYVKSRFPRHKEEA.

11 helical membrane-spanning segments follow: residues 15-37 (LFIL…GIIG), 345-362 (FELM…YLFL), 367-389 (ATII…MVFL), 396-418 (LTLM…VIEN), 438-460 (GEIG…PLLF), 472-494 (FAVT…TPMM), 535-557 (HPWL…WITI), 867-889 (VWLI…ESFI), 909-931 (LIIA…IGIV), 968-990 (ILMT…GVGA), and 1000-1022 (MVGG…YLLF).

Belongs to the resistance-nodulation-cell division (RND) (TC 2.A.6) family. MdtB subfamily. Part of a tripartite efflux system composed of MdtA, MdtB and MdtC. MdtB forms a heteromultimer with MdtC.

The protein localises to the cell inner membrane. This chain is Multidrug resistance protein MdtB, found in Salmonella typhi.